A 318-amino-acid polypeptide reads, in one-letter code: Large ribosomal subunit protein uL10 (318 aa).

Position 24 is a phosphotyrosine (Tyr24). Thr59 is modified (phosphothreonine). Lys264 is covalently cross-linked (Glycyl lysine isopeptide (Lys-Gly) (interchain with G-Cter in ubiquitin)). The interval 293-318 (TAAPAKVEAKEESEESDEDMGFGLFD) is disordered. Lys298 is covalently cross-linked (Glycyl lysine isopeptide (Lys-Gly) (interchain with G-Cter in SUMO1); alternate). Lys298 is covalently cross-linked (Glycyl lysine isopeptide (Lys-Gly) (interchain with G-Cter in SUMO2); alternate). Over residues 303–312 (EESEESDEDM) the composition is skewed to acidic residues. A phosphoserine mark is found at Ser305 and Ser308.

It belongs to the universal ribosomal protein uL10 family. In terms of assembly, P0 forms a pentameric complex by interaction with dimers of P1 and P2. Identified in a IGF2BP1-dependent mRNP granule complex containing untranslated mRNAs. Interacts with APEX1. Interacts with FMR1. Ubiquitinated at Lys-264 by RNF14 and RNF25 in response to ribosome collisions (ribosome stalling).

The protein resides in the nucleus. Its subcellular location is the cytoplasm. Its function is as follows. Ribosomal protein P0 is the functional equivalent of E.coli protein L10. This is Large ribosomal subunit protein uL10 (RPLP0) from Bos taurus (Bovine).